The following is a 959-amino-acid chain: Glycine dehydrogenase (decarboxylating) (959 aa).

Lys708 carries the N6-(pyridoxal phosphate)lysine modification.

This sequence belongs to the GcvP family. The glycine cleavage system is composed of four proteins: P, T, L and H. Requires pyridoxal 5'-phosphate as cofactor.

The enzyme catalyses N(6)-[(R)-lipoyl]-L-lysyl-[glycine-cleavage complex H protein] + glycine + H(+) = N(6)-[(R)-S(8)-aminomethyldihydrolipoyl]-L-lysyl-[glycine-cleavage complex H protein] + CO2. Functionally, the glycine cleavage system catalyzes the degradation of glycine. The P protein binds the alpha-amino group of glycine through its pyridoxal phosphate cofactor; CO(2) is released and the remaining methylamine moiety is then transferred to the lipoamide cofactor of the H protein. This is Glycine dehydrogenase (decarboxylating) from Serratia proteamaculans (strain 568).